A 1041-amino-acid chain; its full sequence is Sodium/potassium-transporting ATPase subunit alpha (1041 aa).

The next 4 helical transmembrane spans lie at 115–135 (FGGFAMLLWIGAILCFVAYSI), 147–167 (NLYLGIVLSAVVIVTGIFSYY), 312–332 (LITGVAVFLGVTFFVIAFILG), and 338–358 (AVIFLIGIIVANVPEGLLATV). Aspartate 394 functions as the 4-aspartylphosphate intermediate in the catalytic mechanism. Lysine 526 is a binding site for ATP. 4 consecutive transmembrane segments (helical) span residues 808-828 (FLAFILCDIPLPLGTVTILCI), 870-890 (MAYGQIGMIQAAAGFFVYFVI), 935-955 (TCHTAFFISIVVVQWADLIIC), and 970-990 (WALNFGLVFETVLAAFLSYCP).

Belongs to the cation transport ATPase (P-type) (TC 3.A.3) family. Type IIC subfamily. As to quaternary structure, the sodium/potassium-transporting ATPase is composed of a catalytic alpha subunit, an auxiliary non-catalytic beta subunit and an additional regulatory subunit. In terms of tissue distribution, high levels are found in some adult tissues: Malpighian tubules, indirect flight muscles, tubular leg muscles and throughout the nervous system (brain, optic lobes, retina and ventral thoracic neuromere). Lower levels are detected at the posterior end where the reproductive organs and rectum are located.

The protein localises to the cell membrane. The enzyme catalyses K(+)(out) + Na(+)(in) + ATP + H2O = K(+)(in) + Na(+)(out) + ADP + phosphate + H(+). This is the catalytic component of the active enzyme, which catalyzes the hydrolysis of ATP coupled with the exchange of sodium and potassium ions across the plasma membrane. This action creates the electrochemical gradient of sodium and potassium ions, providing the energy for active transport of various nutrients. The sequence is that of Sodium/potassium-transporting ATPase subunit alpha (Atpalpha) from Drosophila melanogaster (Fruit fly).